We begin with the raw amino-acid sequence, 266 residues long: Regulatory protein RecX (266 aa).

Belongs to the RecX family.

It localises to the cytoplasm. Modulates RecA activity. This Enterococcus faecalis (strain ATCC 700802 / V583) protein is Regulatory protein RecX.